A 243-amino-acid chain; its full sequence is MSNSHYNNYQQQQPHSSNGDPEYQHQQMVHQPQRFSNGHGMKTVAVPDMCLFCFEVLDCELNNVDGPSVPVFSNDAYPLFVTWKIGRDKRLRGCIGTFSAMELHHGLREYALTSAFKDSRFAPISRDELPRLTVSVSILQNFEEAQGHLDWQLGVHGIRIEFLTERGCKRTATYLPQVATEQGWDQLQTIDSLLRKGGYRAAITPETRKSIKLTRYRSQEIQMHYKEYREYQERRAQFGKVQC.

Over residues 1–18 (MSNSHYNNYQQQQPHSSN) the composition is skewed to low complexity. Residues 1–30 (MSNSHYNNYQQQQPHSSNGDPEYQHQQMVH) form a disordered region. In terms of domain architecture, AMMECR1 spans 38-232 (GHGMKTVAVP…MHYKEYREYQ (195 aa)).

This is an uncharacterized protein from Drosophila melanogaster (Fruit fly).